The following is a 1121-amino-acid chain: PR domain zinc finger protein 10 (1121 aa).

2 disordered regions span residues 1–24 (MEAKQESSTVWSTASNNDTGNTPQ) and 92–125 (TEASSSPLGATDSTVDSEDEEEDNDSEDSEMDDW). Positions 106–124 (VDSEDEEEDNDSEDSEMDD) are enriched in acidic residues. Residues 173-290 (LPLVLYIDRF…PKQELKVWYA (118 aa)) enclose the SET domain. The tract at residues 192–295 (IPKRTQFGPL…KVWYAASYAE (104 aa)) is N-terminal PR domain; essential for transcriptional activation. Residues 319–341 (WPCYECNRRFMSSEQLQQHLNMH) form a C2H2-type 1 zinc finger. Disordered stretches follow at residues 350–387 (RPKSRGRGRGRKRFGGARRPGRRTKFLCPQTPVESADK) and 419–473 (ESME…PHLT). The segment covering 351–374 (PKSRGRGRGRKRFGGARRPGRRTK) has biased composition (basic residues). C2H2-type zinc fingers lie at residues 500 to 522 (FKCPQCGKAFRDKEKLEQHMRFH), 529 to 551 (HVCHQCGKGFLSSTSLEDHLVLH), 557 to 579 (YSCLFCAESYDRLELLKVHVGIH), 585 to 608 (FLCPSCKKSFTDFIQVKKHVRSFH), 613 to 635 (FQCSECDKAFCRPDKLRLHMLRH), 641 to 664 (FLCSTCGKQFKRKDKLREHMQRMH), 696 to 719 (FKCRLCMMGFRRRGMLVNHLSKRH), 741 to 764 (YYCQYCDKVYKSASKRKAHILKNH), and 803 to 826 (VCCPHCAKQYSSKTKMVQHIRKKH). The C-terminal glutamine-rich region; essential for transcriptional activation stretch occupies residues 871–1101 (QAMTELSQTL…PAGGQQATTQ (231 aa)). The disordered stretch occupies residues 1077–1097 (VPSTATQGHPDPLEQPAGGQQ).

It belongs to the class V-like SAM-binding methyltransferase superfamily.

Its subcellular location is the nucleus. Functionally, transcriptional activator, essential for early embryonic development and survival of embryonic stem cells (ESCs). Supports cell growth and survival during early development by transcriptionally activating the expression of the translation initiation factor EIF3B, to sustain global translation. Activates the transcription of FLNC. In Danio rerio (Zebrafish), this protein is PR domain zinc finger protein 10 (prdm10).